The following is a 485-amino-acid chain: Glycogen synthase (485 aa).

Lys15 lines the ADP-alpha-D-glucose pocket.

This sequence belongs to the glycosyltransferase 1 family. Bacterial/plant glycogen synthase subfamily.

It catalyses the reaction [(1-&gt;4)-alpha-D-glucosyl](n) + ADP-alpha-D-glucose = [(1-&gt;4)-alpha-D-glucosyl](n+1) + ADP + H(+). The protein operates within glycan biosynthesis; glycogen biosynthesis. Its function is as follows. Synthesizes alpha-1,4-glucan chains using ADP-glucose. This Geobacillus thermodenitrificans (strain NG80-2) protein is Glycogen synthase.